A 489-amino-acid chain; its full sequence is Beta-dihydromenaquinone-9 omega-hydroxylase (489 aa).

Cysteine 435 contributes to the heme binding site.

Belongs to the cytochrome P450 family. It depends on heme as a cofactor.

The protein localises to the cytoplasm. The catalysed reaction is beta-dihydromenaquinone-9 + 2 reduced [2Fe-2S]-[ferredoxin] + O2 + 2 H(+) = omega-hydroxy-beta-dihydromenaquinone-9 + 2 oxidized [2Fe-2S]-[ferredoxin] + H2O. Functionally, involved in the biosynthesis of sulfomenaquinone (SMK, initially named S881 on the basis of its mass), which is localized in the outer envelope of M.bovis and negatively regulates its virulence. Catalyzes the hydroxylation of beta-dihydromenaquinone-9, leading to the formation of omega-hydroxy-beta-dihydromenaquinone-9. This Mycobacterium bovis (strain ATCC BAA-935 / AF2122/97) protein is Beta-dihydromenaquinone-9 omega-hydroxylase (cyp128).